The following is a 387-amino-acid chain: MATTKSVLVLIFMILATTSSTFATLGEMVTVLSIDGGGIKGIIPGIILEFLEGQLQKMDNNADARLADYFDVIGGTSTGGLLTAMITTPNENNRPFAAAKDIVPFYFQHGPHIFNSSTGQFFGPKYDGKYLMQVLQEKLGETRVHQALTEVAISSFDIKTNKPVIFTKSNLAKSPELDAKMSDICYSTAAAPTYFPPHYFATNTSNGDKYEFNLVDGAVATVADPALLSVSVATRRAEEDPAFASIRSLNYKQLLLLSLGTGTNSEFDKTHTAQETAKWGALQWMLVIQQMTEAASSYMTDYYLSTVFQDLHSQNNYLRVQENALTGTTTKADDASEANMELLVQVGENLLKKPVSKDNPETYEEALKRFAKLLSDRKKFRANKASY.

The first 23 residues, 1–23, serve as a signal peptide directing secretion; that stretch reads MATTKSVLVLIFMILATTSSTFA. One can recognise a PNPLA domain in the interval 32-230; it reads LSIDGGGIKG…TVADPALLSV (199 aa). The short motif at 36 to 41 is the GXGXXG element; that stretch reads GGGIKG. A GXSXG motif is present at residues 75 to 79; the sequence is GTSTG. Serine 77 functions as the Nucleophile in the catalytic mechanism. 2 N-linked (GlcNAc...) asparagine glycosylation sites follow: asparagine 115 and asparagine 203. Aspartate 216 acts as the Proton acceptor in catalysis. The DGA/G signature appears at 216–218; the sequence is DGA.

This sequence belongs to the patatin family. In terms of tissue distribution, tuber.

It is found in the vacuole. Its function is as follows. Probable lipolytic acyl hydrolase (LAH), an activity which is thought to be involved in the response of tubers to pathogens. This is Patatin-05 (pat1-k1) from Solanum tuberosum (Potato).